Reading from the N-terminus, the 1558-residue chain is Calmodulin-regulated spectrin-associated protein 1-B (1558 aa).

The Calponin-homology (CH) domain occupies 231 to 346 (WYWKLVPVRY…FIAELFWWFE (116 aa)). Composition is skewed to polar residues over residues 400–417 (VQNSPEVCNSNKGSSGFS), 440–450 (ACRNRSNSLTQ), and 504–516 (ASTVTPKHQSHPG). 7 disordered regions span residues 400-464 (VQNS…SDKR), 504-523 (ASTVTPKHQSHPGQGSVRRI), 551-585 (NDITLTNSEDTERQGVTPGAKSIWGRQEDASSDSR), 602-675 (AKEK…APGQ), 737-790 (TKEL…VASG), 803-850 (QRFG…QNKD), and 943-968 (DRSKEAEEPEKASCEWAGGGTVSSSP). Over residues 602–620 (AKEKSISLNKEEESGEGRQ) the composition is skewed to basic and acidic residues. Residues 643 to 658 (QTLNRTFTPNTSSEFE) are compositionally biased toward polar residues. Positions 737-772 (TKELHPDKKQHFEEEVESAKLREDMNVKEHEDKDGG) are enriched in basic and acidic residues. 2 stretches are compositionally biased toward low complexity: residues 776–790 (SSPGQQSQVSSVASG) and 812–822 (RSSTSSSQRTT). Residues 849–887 (KDNANMLASELVQLHMQLEEKRRAIESQKKKMEILTARQ) adopt a coiled-coil conformation. A compositionally biased stretch (basic and acidic residues) spans 943–955 (DRSKEAEEPEKAS). Residues 971–1004 (VEEEVDLNECNRSIELLNEAIGSIQQQMMQLSLQ) adopt a coiled-coil conformation. Disordered regions lie at residues 1041 to 1131 (FVEP…TFHL), 1257 to 1293 (LRKQQLEAESEQKRDETRRKAEEERIRKEEEKARREL), 1305 to 1344 (ELCEEQEQPQPKPKTKPKKQRLKSVVKEEPSIDPLPKCPA), and 1360 to 1414 (LASV…ITST). Residues 1080–1090 (SSTPTPTDSPS) show a composition bias toward low complexity. Residues 1106–1115 (DFVQSSVRSE) show a composition bias toward polar residues. A coiled-coil region spans residues 1243 to 1303 (AFLLKQQRKA…IKQEYLRKKQ (61 aa)). Over residues 1317–1328 (PKTKPKKQRLKS) the composition is skewed to basic residues. In terms of domain architecture, CKK spans 1421–1555 (GPKLFKEPSA…QAKRPAGPKK (135 aa)).

The protein belongs to the CAMSAP1 family.

It is found in the cytoplasm. Its subcellular location is the cytoskeleton. Its function is as follows. Key microtubule-organizing protein that specifically binds the minus-end of non-centrosomal microtubules and regulates their dynamics and organization. Specifically recognizes growing microtubule minus-ends and stabilizes microtubules. Acts on free microtubule minus-ends that are not capped by microtubule-nucleating proteins or other factors and protects microtubule minus-ends from depolymerization. In contrast to camsap2 and camsap3, tracks along the growing tips of minus-end microtubules without significantly affecting the polymerization rate: binds at the very tip of the microtubules minus-end and acts as a minus-end tracking protein (-TIP) that dissociates from microtubules after allowing tubulin incorporation. Through interaction with spectrin may regulate neurite outgrowth. The chain is Calmodulin-regulated spectrin-associated protein 1-B (camsap1b) from Danio rerio (Zebrafish).